Consider the following 241-residue polypeptide: ATP synthase subunit a (241 aa).

The next 5 membrane-spanning stretches (helical) occupy residues 30–50 (GQVFLTSWILLGALLVFISLG), 91–111 (FIGTLFLFVFVSNWGGALIPW), 128–148 (INTTIALALLVSLSYFYAGLS), 193–213 (LVVGVLVFLVPLILPIPVMFL), and 214–234 (GLFTSAIQALIFATLAAYYIG).

It belongs to the ATPase A chain family. F-type ATPases have 2 components, CF(1) - the catalytic core - and CF(0) - the membrane proton channel. CF(1) has five subunits: alpha(3), beta(3), gamma(1), delta(1), epsilon(1). CF(0) has four main subunits: a, b, b' and c.

It localises to the cellular thylakoid membrane. Key component of the proton channel; it plays a direct role in the translocation of protons across the membrane. The chain is ATP synthase subunit a from Prochlorococcus marinus (strain MIT 9312).